The chain runs to 198 residues: Glycerol-3-phosphate acyltransferase (198 aa).

The next 5 helical transmembrane spans lie at leucine 5–glycine 25, serine 56–phenylalanine 76, phenylalanine 84–phenylalanine 104, alanine 114–valine 134, and leucine 158–tryptophan 178.

This sequence belongs to the PlsY family. Probably interacts with PlsX.

Its subcellular location is the cell membrane. It carries out the reaction an acyl phosphate + sn-glycerol 3-phosphate = a 1-acyl-sn-glycero-3-phosphate + phosphate. It functions in the pathway lipid metabolism; phospholipid metabolism. Functionally, catalyzes the transfer of an acyl group from acyl-phosphate (acyl-PO(4)) to glycerol-3-phosphate (G3P) to form lysophosphatidic acid (LPA). This enzyme utilizes acyl-phosphate as fatty acyl donor, but not acyl-CoA or acyl-ACP. The protein is Glycerol-3-phosphate acyltransferase of Listeria monocytogenes serovar 1/2a (strain ATCC BAA-679 / EGD-e).